The primary structure comprises 435 residues: uncharacterized protein (435 aa).

Residues Gln-261, Tyr-294, Glu-318, and Asp-366 each coordinate S-adenosyl-L-methionine. The active-site Nucleophile is the Cys-393.

The protein belongs to the class I-like SAM-binding methyltransferase superfamily. RNA M5U methyltransferase family.

This is an uncharacterized protein from Bifidobacterium longum (strain NCC 2705).